Consider the following 477-residue polypeptide: Cobyric acid synthase (477 aa).

The GATase cobBQ-type domain occupies G248–F432. C330 (nucleophile) is an active-site residue. H424 is an active-site residue.

This sequence belongs to the CobB/CobQ family. CobQ subfamily.

It functions in the pathway cofactor biosynthesis; adenosylcobalamin biosynthesis. Its function is as follows. Catalyzes amidations at positions B, D, E, and G on adenosylcobyrinic A,C-diamide. NH(2) groups are provided by glutamine, and one molecule of ATP is hydrogenolyzed for each amidation. The polypeptide is Cobyric acid synthase (Paracoccus denitrificans (strain Pd 1222)).